Reading from the N-terminus, the 254-residue chain is Phosphate import ATP-binding protein PstB (254 aa).

The 243-residue stretch at 7 to 249 folds into the ABC transporter domain; it reads MVAESMSFYY…PREKQTEDYI (243 aa). 39-46 is an ATP binding site; that stretch reads GPSGCGKS.

It belongs to the ABC transporter superfamily. Phosphate importer (TC 3.A.1.7) family. The complex is composed of two ATP-binding proteins (PstB), two transmembrane proteins (PstC and PstA) and a solute-binding protein (PstS).

It is found in the cell inner membrane. It catalyses the reaction phosphate(out) + ATP + H2O = ADP + 2 phosphate(in) + H(+). Functionally, part of the ABC transporter complex PstSACB involved in phosphate import. Responsible for energy coupling to the transport system. The polypeptide is Phosphate import ATP-binding protein PstB (Chlorobium chlorochromatii (strain CaD3)).